A 380-amino-acid chain; its full sequence is Queuine tRNA-ribosyltransferase (380 aa).

Aspartate 96 functions as the Proton acceptor in the catalytic mechanism. Substrate contacts are provided by residues 96 to 100, aspartate 150, glutamine 193, and glycine 220; that span reads DSGGF. The RNA binding stretch occupies residues 251–257; that stretch reads GVGAPDS. The active-site Nucleophile is the aspartate 270. The segment at 275-279 is RNA binding; important for wobble base 34 recognition; it reads TRIAR. The Zn(2+) site is built by cysteine 308, cysteine 310, cysteine 313, and histidine 339.

The protein belongs to the queuine tRNA-ribosyltransferase family. In terms of assembly, homodimer. Within each dimer, one monomer is responsible for RNA recognition and catalysis, while the other monomer binds to the replacement base PreQ1. Zn(2+) serves as cofactor.

It carries out the reaction 7-aminomethyl-7-carbaguanine + guanosine(34) in tRNA = 7-aminomethyl-7-carbaguanosine(34) in tRNA + guanine. Its pathway is tRNA modification; tRNA-queuosine biosynthesis. Its function is as follows. Catalyzes the base-exchange of a guanine (G) residue with the queuine precursor 7-aminomethyl-7-deazaguanine (PreQ1) at position 34 (anticodon wobble position) in tRNAs with GU(N) anticodons (tRNA-Asp, -Asn, -His and -Tyr). Catalysis occurs through a double-displacement mechanism. The nucleophile active site attacks the C1' of nucleotide 34 to detach the guanine base from the RNA, forming a covalent enzyme-RNA intermediate. The proton acceptor active site deprotonates the incoming PreQ1, allowing a nucleophilic attack on the C1' of the ribose to form the product. After dissociation, two additional enzymatic reactions on the tRNA convert PreQ1 to queuine (Q), resulting in the hypermodified nucleoside queuosine (7-(((4,5-cis-dihydroxy-2-cyclopenten-1-yl)amino)methyl)-7-deazaguanosine). The chain is Queuine tRNA-ribosyltransferase from Streptococcus sanguinis (strain SK36).